The primary structure comprises 213 residues: Thiamine-phosphate synthase (213 aa).

4-amino-2-methyl-5-(diphosphooxymethyl)pyrimidine is bound by residues 39–43 (QYRDK) and Asp-71. Mg(2+) contacts are provided by Asp-72 and Asp-91. A 4-amino-2-methyl-5-(diphosphooxymethyl)pyrimidine-binding site is contributed by Ser-108. 135 to 137 (TDT) is a 2-[(2R,5Z)-2-carboxy-4-methylthiazol-5(2H)-ylidene]ethyl phosphate binding site. Lys-138 is a binding site for 4-amino-2-methyl-5-(diphosphooxymethyl)pyrimidine. 2-[(2R,5Z)-2-carboxy-4-methylthiazol-5(2H)-ylidene]ethyl phosphate-binding positions include Gly-165 and 185–186 (VS).

Belongs to the thiamine-phosphate synthase family. The cofactor is Mg(2+).

The enzyme catalyses 2-[(2R,5Z)-2-carboxy-4-methylthiazol-5(2H)-ylidene]ethyl phosphate + 4-amino-2-methyl-5-(diphosphooxymethyl)pyrimidine + 2 H(+) = thiamine phosphate + CO2 + diphosphate. It catalyses the reaction 2-(2-carboxy-4-methylthiazol-5-yl)ethyl phosphate + 4-amino-2-methyl-5-(diphosphooxymethyl)pyrimidine + 2 H(+) = thiamine phosphate + CO2 + diphosphate. The catalysed reaction is 4-methyl-5-(2-phosphooxyethyl)-thiazole + 4-amino-2-methyl-5-(diphosphooxymethyl)pyrimidine + H(+) = thiamine phosphate + diphosphate. The protein operates within cofactor biosynthesis; thiamine diphosphate biosynthesis; thiamine phosphate from 4-amino-2-methyl-5-diphosphomethylpyrimidine and 4-methyl-5-(2-phosphoethyl)-thiazole: step 1/1. Condenses 4-methyl-5-(beta-hydroxyethyl)thiazole monophosphate (THZ-P) and 2-methyl-4-amino-5-hydroxymethyl pyrimidine pyrophosphate (HMP-PP) to form thiamine monophosphate (TMP). This chain is Thiamine-phosphate synthase, found in Thermoplasma acidophilum (strain ATCC 25905 / DSM 1728 / JCM 9062 / NBRC 15155 / AMRC-C165).